The sequence spans 341 residues: Anthranilate phosphoribosyltransferase (341 aa).

5-phospho-alpha-D-ribose 1-diphosphate-binding positions include Gly-84, 94–97 (NVST), 112–120 (KHGGRAASS), and Ser-124. Position 84 (Gly-84) interacts with anthranilate. Ser-96 provides a ligand contact to Mg(2+). Arg-170 is an anthranilate binding site. Mg(2+)-binding residues include Asp-229 and Glu-230.

The protein belongs to the anthranilate phosphoribosyltransferase family. Homodimer. Mg(2+) is required as a cofactor.

The catalysed reaction is N-(5-phospho-beta-D-ribosyl)anthranilate + diphosphate = 5-phospho-alpha-D-ribose 1-diphosphate + anthranilate. It participates in amino-acid biosynthesis; L-tryptophan biosynthesis; L-tryptophan from chorismate: step 2/5. Its function is as follows. Catalyzes the transfer of the phosphoribosyl group of 5-phosphorylribose-1-pyrophosphate (PRPP) to anthranilate to yield N-(5'-phosphoribosyl)-anthranilate (PRA). This chain is Anthranilate phosphoribosyltransferase, found in Methylobacillus flagellatus (strain ATCC 51484 / DSM 6875 / VKM B-1610 / KT).